Consider the following 125-residue polypeptide: uncharacterized protein (125 aa).

The disordered stretch occupies residues M1–S21. The segment covering S7–S21 has biased composition (low complexity).

This is an uncharacterized protein from Saccharomyces cerevisiae (strain ATCC 204508 / S288c) (Baker's yeast).